The chain runs to 475 residues: Probable phenylalanine--tRNA ligase alpha subunit (475 aa).

The segment at 2 to 151 is contains the major tRNA-Phe binding sites; that stretch reads TAVAQKIIEN…KRKLVSRRKK (150 aa). L-phenylalanine is bound by residues T309, 351–353, and Y391; that span reads QVE. Mg(2+) is bound at residue E393. Residue F417 participates in L-phenylalanine binding.

The protein belongs to the class-II aminoacyl-tRNA synthetase family. Phe-tRNA synthetase alpha subunit type 2 subfamily. As to quaternary structure, tetramer of two alpha and two beta subunits. The cofactor is Mg(2+).

The protein resides in the cytoplasm. The enzyme catalyses tRNA(Phe) + L-phenylalanine + ATP = L-phenylalanyl-tRNA(Phe) + AMP + diphosphate + H(+). The protein is Probable phenylalanine--tRNA ligase alpha subunit of Encephalitozoon cuniculi (strain GB-M1) (Microsporidian parasite).